Here is a 156-residue protein sequence, read N- to C-terminus: Endoribonuclease YbeY (156 aa).

3 residues coordinate Zn(2+): histidine 122, histidine 126, and histidine 132.

It belongs to the endoribonuclease YbeY family. It depends on Zn(2+) as a cofactor.

It localises to the cytoplasm. Functionally, single strand-specific metallo-endoribonuclease involved in late-stage 70S ribosome quality control and in maturation of the 3' terminus of the 16S rRNA. In Bacillus cereus (strain G9842), this protein is Endoribonuclease YbeY.